Reading from the N-terminus, the 431-residue chain is Glutamate--tRNA ligase 1 (431 aa).

The 'HIGH' region signature appears at 6–16 (PSPTGDMHIGN). A 'KMSKS' region motif is present at residues 235–239 (KMSKR). Residue Lys238 coordinates ATP.

The protein belongs to the class-I aminoacyl-tRNA synthetase family. Glutamate--tRNA ligase type 1 subfamily. Monomer.

The protein resides in the cytoplasm. The catalysed reaction is tRNA(Glu) + L-glutamate + ATP = L-glutamyl-tRNA(Glu) + AMP + diphosphate. Catalyzes the attachment of glutamate to tRNA(Glu) in a two-step reaction: glutamate is first activated by ATP to form Glu-AMP and then transferred to the acceptor end of tRNA(Glu). The polypeptide is Glutamate--tRNA ligase 1 (Campylobacter jejuni subsp. jejuni serotype O:6 (strain 81116 / NCTC 11828)).